Here is a 343-residue protein sequence, read N- to C-terminus: Programmed cell death protein 2 (343 aa).

Zn(2+) contacts are provided by C134, C137, C145, C148, C154, H158, H167, and C171. Residues 134-171 form an MYND-type; atypical zinc finger; that stretch reads CRVCGCLAPMTCSRCKQAHYCSKEHQTLDWQLGHKQAC.

Post-translationally, ubiquitinated by PRKN, promoting proteasomal degradation.

It is found in the nucleus. May be a DNA-binding protein with a regulatory function. May play an important role in cell death and/or in regulation of cell proliferation. The protein is Programmed cell death protein 2 (Pdcd2) of Rattus norvegicus (Rat).